A 176-amino-acid chain; its full sequence is Replication restart protein PriC (176 aa).

This sequence belongs to the PriC family. Component of the replication restart primosome, which is composed of PriA, PriB, PriC, DnaB and DnaT; DnaG primase associates transiently with this complex. Interacts with the C-terminus of SSB; this interaction is required to load the main replicative helicase onto substrate replication forks. Interacts with helicase DnaB alone and in the DnaB-DnaC complex, probably 1:1 binding with DnaB. Interacts with DnaT.

Functionally, involved in the restart of stalled replication forks, which reloads the DnaB replicative helicase on sites other than the origin of replication. Recognizes abandoned replication forks and remodels DNA single-stranded binding protein (SSB) on ssDNA to uncover a loading site for DnaB. There are several restart pathways, the PriA-PriC pathway is a minor restart pathway. Part of the minor PriC-Rep pathway for restart of stalled replication forks, which has a different substrate specificity than PriA. Part of the major restart pathway with PriA, PriB, DnaB, DnaT and DnaG primase. priB and priC have redundant roles in the cell. Binds 7-9 nucleotides of single-stranded (ss)DNA. The sequence is that of Replication restart protein PriC from Klebsiella pneumoniae subsp. pneumoniae (strain ATCC 700721 / MGH 78578).